A 327-amino-acid polypeptide reads, in one-letter code: Methionyl-tRNA formyltransferase (327 aa).

121–124 (SLLP) provides a ligand contact to (6S)-5,6,7,8-tetrahydrofolate.

This sequence belongs to the Fmt family.

The enzyme catalyses L-methionyl-tRNA(fMet) + (6R)-10-formyltetrahydrofolate = N-formyl-L-methionyl-tRNA(fMet) + (6S)-5,6,7,8-tetrahydrofolate + H(+). In terms of biological role, attaches a formyl group to the free amino group of methionyl-tRNA(fMet). The formyl group appears to play a dual role in the initiator identity of N-formylmethionyl-tRNA by promoting its recognition by IF2 and preventing the misappropriation of this tRNA by the elongation apparatus. The polypeptide is Methionyl-tRNA formyltransferase (Burkholderia pseudomallei (strain 668)).